We begin with the raw amino-acid sequence, 241 residues long: 15,16-dihydrobiliverdin:ferredoxin oxidoreductase (241 aa).

A disordered region spans residues 16–35; the sequence is RGGQPAAVPEGLEHCHSSKS.

This sequence belongs to the HY2 family.

The catalysed reaction is 15,16-dihydrobiliverdin + oxidized 2[4Fe-4S]-[ferredoxin] = biliverdin IXalpha + reduced 2[4Fe-4S]-[ferredoxin] + 2 H(+). Its function is as follows. Catalyzes the two-electron reduction of biliverdin IX-alpha at the C15 methine bridge. The polypeptide is 15,16-dihydrobiliverdin:ferredoxin oxidoreductase (Synechococcus sp. (strain WH7803)).